Here is a 479-residue protein sequence, read N- to C-terminus: Calcium-dependent mitochondrial ATP-magnesium/phosphate carrier protein 3 (479 aa).

The Mitochondrial intermembrane segment spans residues 1–208; sequence MESSKPKNRN…ISKHVKRSRL (208 aa). EF-hand domains are found at residues 33–68, 69–104, 105–135, and 136–171; these read EREI…LQIP, PEYK…KELE, LYRI…AGIE, and IDDE…YPHE. The Ca(2+) site is built by Asp82, Asn84, Asp86, Arg88, and Glu93. The Ca(2+) site is built by Asp149, Asp151, Asn153, Thr155, and Glu160. 3 Solcar repeats span residues 203-286, 294-381, and 392-475; these read VKRS…LKPM, IGTS…LKDL, and PGPL…MKKN. The chain crosses the membrane as a helical span at residues 209-226; that stretch reads LLAGGLAGAVSRTATAPL. Residues 227–260 lie on the Mitochondrial matrix side of the membrane; the sequence is DRLKVVLQVQRAHAGVLPTIKKIWREDKLMGFFR. Residues 261–280 form a helical membrane-spanning segment; that stretch reads GNGLNVMKVAPESAIKFCAY. The Mitochondrial intermembrane portion of the chain corresponds to 281–303; that stretch reads EMLKPMIGGEDGDIGTSGRLMAG. Residues 304–317 form a helical membrane-spanning segment; the sequence is GMAGALAQTAIYPM. Residues 318 to 355 are Mitochondrial matrix-facing; the sequence is DLVKTRLQTCVSEGGKAPKLWKLTKDIWVREGPRAFYK. A helical membrane pass occupies residues 356-375; the sequence is GLFPSLLGIVPYAGIDLAAY. The Mitochondrial intermembrane segment spans residues 376–397; that stretch reads ETLKDLSRTYILQDTEPGPLIQ. The chain crosses the membrane as a helical span at residues 398-415; it reads LSCGMTSGALGASCVYPL. At 416–449 the chain is on the mitochondrial matrix side; the sequence is QVVRTRMQADSSKTTMKQEFMNTMKGEGLRGFYR. A helical membrane pass occupies residues 450-469; sequence GLLPNLLKVVPAASITYIVY. The Mitochondrial intermembrane portion of the chain corresponds to 470 to 479; the sequence is EAMKKNMALD.

This sequence belongs to the mitochondrial carrier (TC 2.A.29) family. As to expression, expressed in flowers, leaves, stems, roots and seedlings, mostly in seedlings.

It is found in the mitochondrion inner membrane. With respect to regulation, counter-exchange transport activity is saturable and inhibited by pyridoxal-5'-phosphate, EDTA and EGTA. Activated by calcium Ca(2+) and manganese Mn(2+) ions, and slightly by iron Fe(2+) and zinc Zn(2+) ions. Repressed by copper ions Cu(2+) and slightly by magnesium Mg(2+) ions. Magnesium Mg(2+) ions promotes slightly ATP uptake, ATP-Mg(2+) being exchanged with ATP(4-). Its function is as follows. Calcium-dependent mitochondrial carrier protein that catalyzes the import of ATP co-transported with metal divalent cations across the mitochondrial inner membrane in exchange for phosphate (Pi). Can transport phosphate, AMP, ADP, ATP, adenosine 5'-phosphosulfate, sulfate and thiosulfate, and, to a lesser extent, other nucleotides. Binds calcium ions Ca(2+). Also mediates calcium uptake. In Arabidopsis thaliana (Mouse-ear cress), this protein is Calcium-dependent mitochondrial ATP-magnesium/phosphate carrier protein 3.